We begin with the raw amino-acid sequence, 211 residues long: ATP-dependent dethiobiotin synthetase BioD 2 (211 aa).

An ATP-binding site is contributed by 13–18 (DIGKTI). Threonine 17 contacts Mg(2+). The active site involves lysine 38. Residue threonine 42 participates in substrate binding. Residues aspartate 50, 115 to 118 (EGAG), and 175 to 176 (NT) contribute to the ATP site. 2 residues coordinate Mg(2+): aspartate 50 and glutamate 115.

It belongs to the dethiobiotin synthetase family. Homodimer. Requires Mg(2+) as cofactor.

It is found in the cytoplasm. The enzyme catalyses (7R,8S)-7,8-diammoniononanoate + CO2 + ATP = (4R,5S)-dethiobiotin + ADP + phosphate + 3 H(+). It participates in cofactor biosynthesis; biotin biosynthesis; biotin from 7,8-diaminononanoate: step 1/2. Its function is as follows. Catalyzes a mechanistically unusual reaction, the ATP-dependent insertion of CO2 between the N7 and N8 nitrogen atoms of 7,8-diaminopelargonic acid (DAPA, also called 7,8-diammoniononanoate) to form a ureido ring. In Haemophilus ducreyi (strain 35000HP / ATCC 700724), this protein is ATP-dependent dethiobiotin synthetase BioD 2.